We begin with the raw amino-acid sequence, 369 residues long: Serpentine receptor class epsilon-45 (369 aa).

Transmembrane regions (helical) follow at residues 1–21, 39–59, 67–87, 127–147, 169–191, 195–217, 258–278, and 291–311; these read MIFL…IFIL, FVLT…AIHI, TVLL…NILI, FFLG…TLLV, GLFF…LFFF, HFAV…FTYV, VIHA…FMYL, and IFES…LGSV.

Belongs to the nematode receptor-like protein sre family.

It localises to the membrane. In Caenorhabditis elegans, this protein is Serpentine receptor class epsilon-45 (sre-45).